Reading from the N-terminus, the 199-residue chain is DnaJ homolog subfamily C member 5B (199 aa).

Ser-14 and Ser-16 each carry phosphoserine. The 66-residue stretch at Ala-19 to Gly-84 folds into the J domain.

Interacts with the chaperone complex consisting of HSC70 and SGTA. In terms of processing, palmitoylated.

It is found in the membrane. The chain is DnaJ homolog subfamily C member 5B (DNAJC5B) from Ailuropoda melanoleuca (Giant panda).